A 448-amino-acid polypeptide reads, in one-letter code: Potassium/proton antiporter CemA (448 aa).

Transmembrane regions (helical) follow at residues 47–67 (IVFY…LSLL), 213–233 (LSSL…STLF), 314–334 (IISH…LFVA), and 395–415 (IISC…KYLI).

It belongs to the CemA family.

It is found in the plastid membrane. The catalysed reaction is K(+)(in) + H(+)(out) = K(+)(out) + H(+)(in). Its function is as follows. May be involved in proton extrusion. In Aneura mirabilis (Parasitic liverwort), this protein is Potassium/proton antiporter CemA.